The following is a 102-amino-acid chain: Small ribosomal subunit protein uS10 (102 aa).

This sequence belongs to the universal ribosomal protein uS10 family. Part of the 30S ribosomal subunit.

Its function is as follows. Involved in the binding of tRNA to the ribosomes. This chain is Small ribosomal subunit protein uS10, found in Parvibaculum lavamentivorans (strain DS-1 / DSM 13023 / NCIMB 13966).